The following is a 370-amino-acid chain: D-aspartate oxidase (370 aa).

An N-terminal signal peptide occupies residues 1 to 18 (MPPRIIILGAGIIGLSTA). Residues isoleucine 13, glutamate 42, alanine 63, serine 64, and glycine 68 each contribute to the FAD site. Residue asparagine 207 is glycosylated (N-linked (GlcNAc...) asparagine). FAD-binding residues include arginine 308, glycine 338, and tyrosine 339.

The protein belongs to the DAMOX/DASOX family. Monomer. It depends on FAD as a cofactor.

It catalyses the reaction D-aspartate + O2 + H2O = oxaloacetate + H2O2 + NH4(+). The enzyme catalyses D-glutamate + O2 + H2O = H2O2 + 2-oxoglutarate + NH4(+). In terms of biological role, selectively catalyzes the oxidative deamination of acidic amino acids. Protects the organism from the toxicity of D-amino acids. Enables the organism to utilize D-amino acids as a source of nutrients. The polypeptide is D-aspartate oxidase (Talaromyces thermophilus).